A 70-amino-acid chain; its full sequence is DNA gyrase inhibitor YacG (70 aa).

Zn(2+)-binding residues include Cys20, Cys23, Cys35, and Cys39.

This sequence belongs to the DNA gyrase inhibitor YacG family. Interacts with GyrB. The cofactor is Zn(2+).

In terms of biological role, inhibits all the catalytic activities of DNA gyrase by preventing its interaction with DNA. Acts by binding directly to the C-terminal domain of GyrB, which probably disrupts DNA binding by the gyrase. This Rhizobium etli (strain ATCC 51251 / DSM 11541 / JCM 21823 / NBRC 15573 / CFN 42) protein is DNA gyrase inhibitor YacG.